The chain runs to 353 residues: BLOC-1-related complex subunit 6 (353 aa).

The segment at 23–194 is disordered; the sequence is AIFGDGPGQT…SGAGGGRRAT (172 aa). Over residues 102 to 126 the composition is skewed to basic and acidic residues; that stretch reads FDLHGSSRRKDPEPPEAKPESERVC. Ser-130 and Ser-166 each carry phosphoserine. A compositionally biased stretch (gly residues) spans 172–191; sequence GACGGPASSGGAESGAGGGR. Residue Thr-194 is modified to Phosphothreonine. The residue at position 197 (Ser-197) is a Phosphoserine. The interval 225–253 is disordered; sequence LSGAPQPPPPAPTRPCSAPTPTPAIPPID. Residues 229–253 show a composition bias toward pro residues; the sequence is PQPPPPAPTRPCSAPTPTPAIPPID.

The protein belongs to the BORCS6 family. As to quaternary structure, component of the BLOC-one-related complex (BORC) which is composed of BLOC1S1, BLOC1S2, BORCS5, BORCS6, BORCS7, BORCS8, KXD1 and SNAPIN.

The protein localises to the lysosome membrane. As part of the BORC complex may play a role in lysosomes movement and localization at the cell periphery. Associated with the cytosolic face of lysosomes, the BORC complex may recruit ARL8B and couple lysosomes to microtubule plus-end-directed kinesin motor. The sequence is that of BLOC-1-related complex subunit 6 from Bos taurus (Bovine).